A 266-amino-acid chain; its full sequence is Tryptophan synthase alpha chain (266 aa).

Catalysis depends on proton acceptor residues E47 and D58.

Belongs to the TrpA family. Tetramer of two alpha and two beta chains.

The enzyme catalyses (1S,2R)-1-C-(indol-3-yl)glycerol 3-phosphate + L-serine = D-glyceraldehyde 3-phosphate + L-tryptophan + H2O. It functions in the pathway amino-acid biosynthesis; L-tryptophan biosynthesis; L-tryptophan from chorismate: step 5/5. The alpha subunit is responsible for the aldol cleavage of indoleglycerol phosphate to indole and glyceraldehyde 3-phosphate. This is Tryptophan synthase alpha chain from Leptospira biflexa serovar Patoc (strain Patoc 1 / Ames).